The primary structure comprises 165 residues: Protein SprT (165 aa).

Residues 20–163 enclose the SprT-like domain; the sequence is EKLAQANLKL…RCVHCGEQLV (144 aa). Residue His-78 coordinates Zn(2+). Glu-79 is a catalytic residue. His-82 is a Zn(2+) binding site.

Belongs to the SprT family. The cofactor is Zn(2+).

It localises to the cytoplasm. This Shigella flexneri serotype 5b (strain 8401) protein is Protein SprT.